We begin with the raw amino-acid sequence, 128 residues long: LIM domain-containing protein 2 (128 aa).

N-acetylmethionine is present on M1. Residues 1 to 25 (MFQAAGAAQATPSHEAKGGGSSSTV) are disordered. In terms of domain architecture, LIM zinc-binding spans 39 to 99 (ETCAACQKTV…KPHFQQLFKS (61 aa)). Residues C41, C44, H62, C65, C68, C71, C89, and H92 each coordinate Zn(2+).

As to quaternary structure, interacts with ILK.

Its subcellular location is the cytoplasm. It is found in the nucleus. Functionally, acts as an activator of the protein-kinase ILK, thereby regulating cell motility. This chain is LIM domain-containing protein 2 (LIMD2), found in Bos taurus (Bovine).